The chain runs to 173 residues: Protein-export protein SecB (173 aa).

The protein belongs to the SecB family. In terms of assembly, homotetramer, a dimer of dimers. One homotetramer interacts with 1 SecA dimer.

It is found in the cytoplasm. Its function is as follows. One of the proteins required for the normal export of preproteins out of the cell cytoplasm. It is a molecular chaperone that binds to a subset of precursor proteins, maintaining them in a translocation-competent state. It also specifically binds to its receptor SecA. The protein is Protein-export protein SecB of Novosphingobium aromaticivorans (strain ATCC 700278 / DSM 12444 / CCUG 56034 / CIP 105152 / NBRC 16084 / F199).